Here is a 350-residue protein sequence, read N- to C-terminus: DNA repair protein RAD51 homolog 2 (350 aa).

The segment at 1–75 (MSSKKLRRVG…TAYELKTRRS (75 aa)) is interaction with RAD51C. 108–115 (GPPGCGKT) contacts ATP.

This sequence belongs to the RecA family. RAD51 subfamily. As to quaternary structure, part of the BCDX2 complex consisting of RAD51B, RAD51C, RAD51D and XRCC2; the complex has a ring-like structure arranged into a flat disc around a central channel. The BCDX2 subcomplex RAD51B:RAD51C interacts with RAD51. Interacts with SWSAP1; involved in homologous recombination repair. Interacts with HELQ. In terms of processing, phosphorylated on tyrosine residues by BCR-ABL. Expressed in a wide range of tissues.

It is found in the nucleus. In terms of biological role, involved in the homologous recombination repair (HRR) pathway of double-stranded DNA breaks arising during DNA replication or induced by DNA-damaging agents. May promote the assembly of presynaptic RAD51 nucleoprotein filaments. Binds single-stranded DNA and double-stranded DNA and has DNA-dependent ATPase activity. Part of the RAD51 paralog protein complex BCDX2 which acts in the BRCA1-BRCA2-dependent HR pathway. Upon DNA damage, BCDX2 acts downstream of BRCA2 recruitment and upstream of RAD51 recruitment. BCDX2 binds predominantly to the intersection of the four duplex arms of the Holliday junction and to junction of replication forks. The BCDX2 complex was originally reported to bind single-stranded DNA, single-stranded gaps in duplex DNA and specifically to nicks in duplex DNA. The BCDX2 subcomplex RAD51B:RAD51C exhibits single-stranded DNA-dependent ATPase activity suggesting an involvement in early stages of the HR pathway. This is DNA repair protein RAD51 homolog 2 (Rad51b) from Mus musculus (Mouse).